Reading from the N-terminus, the 444-residue chain is 23S rRNA (uracil(1939)-C(5))-methyltransferase RlmD (444 aa).

The TRAM domain occupies 5–64 (KPKLNLTSQTARIVNLSHDGRGIARVNGKATFIQGALPGEVVEFQYTRVKKDFDEGKLLS). Residues Cys-77, Cys-83, Cys-86, and Cys-166 each coordinate [4Fe-4S] cluster. Positions 276, 305, 310, 326, 353, and 374 each coordinate S-adenosyl-L-methionine. Residue Cys-400 is the Nucleophile of the active site.

This sequence belongs to the class I-like SAM-binding methyltransferase superfamily. RNA M5U methyltransferase family. RlmD subfamily.

It catalyses the reaction uridine(1939) in 23S rRNA + S-adenosyl-L-methionine = 5-methyluridine(1939) in 23S rRNA + S-adenosyl-L-homocysteine + H(+). Functionally, catalyzes the formation of 5-methyl-uridine at position 1939 (m5U1939) in 23S rRNA. The polypeptide is 23S rRNA (uracil(1939)-C(5))-methyltransferase RlmD (Legionella pneumophila (strain Paris)).